The sequence spans 413 residues: Cardiolipin synthase B (413 aa).

PLD phosphodiesterase domains follow at residues 108–135 and 285–312; these read IFRR…SAEH and RRRP…DPLS. Catalysis depends on residues His-113, Lys-115, Asp-120, His-290, Lys-292, and Asp-297. The tract at residues 388–413 is disordered; sequence AQVPPPAQPEMETQDRVDPENSGVKP.

The protein belongs to the phospholipase D family. Cardiolipin synthase subfamily. ClsB sub-subfamily.

Its subcellular location is the cell membrane. The enzyme catalyses 2 a 1,2-diacyl-sn-glycero-3-phospho-(1'-sn-glycerol) = a cardiolipin + glycerol. Its function is as follows. Catalyzes the phosphatidyl group transfer from one phosphatidylglycerol molecule to another to form cardiolipin (CL) (diphosphatidylglycerol) and glycerol. In Salmonella typhi, this protein is Cardiolipin synthase B.